The primary structure comprises 178 residues: uncharacterized protein (178 aa).

Transmembrane regions (helical) follow at residues 3-23 (IPIILTLMLFSLGFIFGFISI), 56-76 (IFLMLAGSITFGLSTFINLIF), 101-121 (LILPHGIFEISAMLISAVAGF), and 150-170 (LSLISIILIVIAAFIEVYITP).

This sequence to M.jannaschii MJ0706 and Synechocystis PCC 6803 slr1478.

It localises to the cell membrane. This is an uncharacterized protein from Methanocaldococcus jannaschii (strain ATCC 43067 / DSM 2661 / JAL-1 / JCM 10045 / NBRC 100440) (Methanococcus jannaschii).